A 248-amino-acid polypeptide reads, in one-letter code: Granzyme C (248 aa).

An N-terminal signal peptide occupies residues 1–18 (MPPVLILLTLLLPLRAGA). The propeptide occupies 19–20 (EE). A Peptidase S1 domain is found at 21-246 (IIGGNEISPH…FVSWIKKTMK (226 aa)). Residues C50 and C66 are joined by a disulfide bond. Residues H65 and D109 each act as charge relay system in the active site. 2 cysteine pairs are disulfide-bonded: C143–C210 and C174–C189. S204 (charge relay system) is an active-site residue.

Belongs to the peptidase S1 family. Granzyme subfamily.

Its subcellular location is the cytolytic granule. In terms of biological role, this enzyme is probably necessary for target cell lysis in cell-mediated immune responses. The protein is Granzyme C (Gzmc) of Mus musculus (Mouse).